The sequence spans 954 residues: Mitogen-activated protein kinase kinase kinase 10 (954 aa).

The 66-residue stretch at Pro-16 to Pro-81 folds into the SH3 domain. The Protein kinase domain occupies Leu-98–Ile-360. ATP is bound by residues Ile-104–Val-112 and Lys-125. The Proton acceptor role is filled by Asp-222. Phosphothreonine; by autocatalysis is present on Thr-258. Residue Ser-262 is modified to Phosphoserine; by autocatalysis and MAP4K1. 2 leucine-zipper regions span residues Ile-384–Leu-405 and Leu-419–Leu-440. Disordered stretches follow at residues Pro-490–His-665, Arg-716–Gly-739, and Ser-757–His-954. 3 positions are modified to phosphoserine: Ser-498, Ser-502, and Ser-506. The segment covering Ala-501–Pro-511 has biased composition (low complexity). Residue Thr-558 is modified to Phosphothreonine. Over residues Gln-566–Gly-578 the composition is skewed to basic and acidic residues. The segment covering Glu-611–Asp-620 has biased composition (acidic residues). Positions Ser-631–Leu-640 are enriched in low complexity. Pro residues predominate over residues Ala-773 to Ser-790. Residue Arg-857 is modified to Omega-N-methylarginine. A compositionally biased stretch (pro residues) spans Pro-913 to Val-927.

It belongs to the protein kinase superfamily. STE Ser/Thr protein kinase family. MAP kinase kinase kinase subfamily. In terms of assembly, homodimer. Interacts with SH3RF2. The cofactor is Mg(2+). In terms of processing, autophosphorylation on serine and threonine residues within the activation loop plays a role in enzyme activation. In terms of tissue distribution, expressed in brain and skeletal muscle.

The catalysed reaction is L-seryl-[protein] + ATP = O-phospho-L-seryl-[protein] + ADP + H(+). It carries out the reaction L-threonyl-[protein] + ATP = O-phospho-L-threonyl-[protein] + ADP + H(+). Its activity is regulated as follows. Homodimerization via the leucine zipper domains is required for autophosphorylation and subsequent activation. Functionally, activates the JUN N-terminal pathway. This Homo sapiens (Human) protein is Mitogen-activated protein kinase kinase kinase 10 (MAP3K10).